The sequence spans 233 residues: 2-phytyl-1,4-naphtoquinone methyltransferase (233 aa).

It belongs to the class I-like SAM-binding methyltransferase superfamily. MenG/UbiE family.

It carries out the reaction demethylphylloquinol + S-adenosyl-L-methionine = phylloquinol + S-adenosyl-L-homocysteine + H(+). It functions in the pathway cofactor biosynthesis; phylloquinone biosynthesis. In terms of biological role, methyltransferase required for the conversion of 2-phytyl-1,4-beta-naphthoquinol to phylloquinol. The polypeptide is 2-phytyl-1,4-naphtoquinone methyltransferase (Synechococcus elongatus (strain ATCC 33912 / PCC 7942 / FACHB-805) (Anacystis nidulans R2)).